An 81-amino-acid polypeptide reads, in one-letter code: Small ribosomal subunit protein bS18 (81 aa).

The protein belongs to the bacterial ribosomal protein bS18 family. As to quaternary structure, part of the 30S ribosomal subunit. Forms a tight heterodimer with protein bS6.

Binds as a heterodimer with protein bS6 to the central domain of the 16S rRNA, where it helps stabilize the platform of the 30S subunit. The polypeptide is Small ribosomal subunit protein bS18 (Rubrobacter xylanophilus (strain DSM 9941 / JCM 11954 / NBRC 16129 / PRD-1)).